A 125-amino-acid chain; its full sequence is Large ribosomal subunit protein bL20 (125 aa).

Belongs to the bacterial ribosomal protein bL20 family.

Its function is as follows. Binds directly to 23S ribosomal RNA and is necessary for the in vitro assembly process of the 50S ribosomal subunit. It is not involved in the protein synthesizing functions of that subunit. In Methylobacterium radiotolerans (strain ATCC 27329 / DSM 1819 / JCM 2831 / NBRC 15690 / NCIMB 10815 / 0-1), this protein is Large ribosomal subunit protein bL20.